Here is a 322-residue protein sequence, read N- to C-terminus: ATP-dependent 6-phosphofructokinase (322 aa).

G12 is an ATP binding site. ADP is bound at residue 22–26 (RATAK). ATP-binding positions include 73–74 (RS) and 103–106 (GDGS). D104 is a binding site for Mg(2+). 127–129 (TID) contributes to the substrate binding site. The active-site Proton acceptor is D129. Residue R156 coordinates ADP. Substrate contacts are provided by residues R164 and 171 to 173 (MGR). ADP is bound by residues 187 to 189 (GGD) and 215 to 217 (KLH). Substrate-binding positions include E224, R245, and 251–254 (HIQR).

Belongs to the phosphofructokinase type A (PFKA) family. ATP-dependent PFK group I subfamily. Prokaryotic clade 'B1' sub-subfamily. In terms of assembly, homotetramer. Requires Mg(2+) as cofactor.

The protein localises to the cytoplasm. It catalyses the reaction beta-D-fructose 6-phosphate + ATP = beta-D-fructose 1,6-bisphosphate + ADP + H(+). The protein operates within carbohydrate degradation; glycolysis; D-glyceraldehyde 3-phosphate and glycerone phosphate from D-glucose: step 3/4. Its activity is regulated as follows. Allosterically activated by ADP and other diphosphonucleosides, and allosterically inhibited by phosphoenolpyruvate. In terms of biological role, catalyzes the phosphorylation of D-fructose 6-phosphate to fructose 1,6-bisphosphate by ATP, the first committing step of glycolysis. This chain is ATP-dependent 6-phosphofructokinase, found in Fusobacterium nucleatum subsp. nucleatum (strain ATCC 25586 / DSM 15643 / BCRC 10681 / CIP 101130 / JCM 8532 / KCTC 2640 / LMG 13131 / VPI 4355).